Reading from the N-terminus, the 485-residue chain is Serine/threonine-protein kinase dst4 (485 aa).

Positions 21–278 (FRVLEVIGQG…AVDLLNHPFI (258 aa)) constitute a Protein kinase domain. ATP is bound by residues 27-35 (IGQGSFGVV) and K50. D142 (proton acceptor) is an active-site residue. Disordered regions lie at residues 304–343 (RRKK…SAGL), 360–424 (VMRE…GSVV), and 436–485 (SMKL…NQDD). Over residues 310 to 324 (EEEAEEAEEGDDYDD) the composition is skewed to acidic residues. The segment covering 370 to 393 (SNNGGTFIYNNNNNNSSKTSSSGT) has biased composition (low complexity). Acidic residues-rich tracts occupy residues 406–417 (DDDDDDDIEEGG) and 450–468 (SSDE…EEGG). Residues 474–485 (VVYTKSPVNQDD) show a composition bias toward polar residues.

Belongs to the protein kinase superfamily. STE Ser/Thr protein kinase family. STE20 subfamily. Mg(2+) is required as a cofactor.

It catalyses the reaction L-seryl-[protein] + ATP = O-phospho-L-seryl-[protein] + ADP + H(+). The enzyme catalyses L-threonyl-[protein] + ATP = O-phospho-L-threonyl-[protein] + ADP + H(+). The chain is Serine/threonine-protein kinase dst4 from Dictyostelium discoideum (Social amoeba).